We begin with the raw amino-acid sequence, 480 residues long: UDP-glycosyltransferase 72B2 (480 aa).

UDP-alpha-D-glucose is bound by residues S277, 347 to 349 (APQ), 364 to 372 (HCGWNSTLE), and 386 to 389 (FAEQ).

This sequence belongs to the UDP-glycosyltransferase family.

In Arabidopsis thaliana (Mouse-ear cress), this protein is UDP-glycosyltransferase 72B2 (UGT72B2).